The sequence spans 57 residues: KCFDHRKERRIIDHIKTTLNHSTLYIYGSVQRSKHYYFTVCTEQGEVLYSFNQVIHS.

The short motif at 6-10 (RKERR) is the Nuclear localization signal element.

As to expression, mesophyll protoplasts.

Its subcellular location is the nucleus. Stress response. May play a role in the reentering of protoplasts into the cell cycle. In Nicotiana sylvestris (Wood tobacco), this protein is Stress response protein.